Here is a 140-residue protein sequence, read N- to C-terminus: Relaxin-3 (140 aa).

The first 23 residues, 1-23 (MATRGLLLASWALLGALVLQAEA), serve as a signal peptide directing secretion. Intrachain disulfides connect cysteine 33-cysteine 127, cysteine 45-cysteine 140, and cysteine 126-cysteine 131. Residues 53 to 116 (ADILAHDPLG…GSPGVVRGSR (64 aa)) constitute a propeptide, connecting peptide.

It belongs to the insulin family. Heterodimer of a B chain and an A chain linked by two disulfide bonds. In terms of tissue distribution, highly abundant expression is detected in neurons within the ventomedial dorsal tegmental nucleus and the laterally central gray alpha of the pons. Also detected at much lower levels within the hippocampus.

Its subcellular location is the secreted. Its function is as follows. May play a role in neuropeptide signaling processes. Ligand for LGR7, relaxin-3 receptor-1 and relaxin-3 receptor-2. In Rattus norvegicus (Rat), this protein is Relaxin-3 (Rln3).